The chain runs to 92 residues: Small ribosomal subunit protein bS20 (92 aa).

The interval 1-23 is disordered; that stretch reads MANSPSAKKRAKQAEKRRSHNAS. Over residues 7-20 the composition is skewed to basic residues; it reads AKKRAKQAEKRRSH.

The protein belongs to the bacterial ribosomal protein bS20 family.

Binds directly to 16S ribosomal RNA. The polypeptide is Small ribosomal subunit protein bS20 (Ectopseudomonas mendocina (strain ymp) (Pseudomonas mendocina)).